The following is a 333-amino-acid chain: Lipoyl synthase (333 aa).

The segment at 1-29 (MTDSAAGATEVATPATPSNKPYDATAKQK) is disordered. The [4Fe-4S] cluster site is built by cysteine 80, cysteine 85, cysteine 91, cysteine 106, cysteine 110, cysteine 113, and serine 320. One can recognise a Radical SAM core domain in the interval 91-309 (CFGKGTATFM…EEKAYEMGFT (219 aa)).

Belongs to the radical SAM superfamily. Lipoyl synthase family. It depends on [4Fe-4S] cluster as a cofactor.

Its subcellular location is the cytoplasm. The catalysed reaction is [[Fe-S] cluster scaffold protein carrying a second [4Fe-4S](2+) cluster] + N(6)-octanoyl-L-lysyl-[protein] + 2 oxidized [2Fe-2S]-[ferredoxin] + 2 S-adenosyl-L-methionine + 4 H(+) = [[Fe-S] cluster scaffold protein] + N(6)-[(R)-dihydrolipoyl]-L-lysyl-[protein] + 4 Fe(3+) + 2 hydrogen sulfide + 2 5'-deoxyadenosine + 2 L-methionine + 2 reduced [2Fe-2S]-[ferredoxin]. Its pathway is protein modification; protein lipoylation via endogenous pathway; protein N(6)-(lipoyl)lysine from octanoyl-[acyl-carrier-protein]: step 2/2. In terms of biological role, catalyzes the radical-mediated insertion of two sulfur atoms into the C-6 and C-8 positions of the octanoyl moiety bound to the lipoyl domains of lipoate-dependent enzymes, thereby converting the octanoylated domains into lipoylated derivatives. The protein is Lipoyl synthase of Ralstonia pickettii (strain 12J).